The chain runs to 471 residues: Cytochrome b-c1 complex subunit 1, mitochondrial (471 aa).

It belongs to the peptidase M16 family.

The protein localises to the mitochondrion matrix. This Caenorhabditis elegans protein is Cytochrome b-c1 complex subunit 1, mitochondrial (ucr-1).